Here is a 432-residue protein sequence, read N- to C-terminus: EF-hand calcium-binding domain-containing protein 3 (432 aa).

EF-hand domains lie at 45-80 (AQLE…LGMN) and 81-116 (LNTY…KKLF). Ca(2+) is bound by residues Asp-94, Asp-96, Asp-98, Lys-100, and Asp-105. Tyr-273 is modified (phosphotyrosine). The interval 394-432 (SMNKSSPSNSGLSSPSDFSESDPETGRKRKRKSSRGFRQ) is disordered. The segment covering 395-411 (MNKSSPSNSGLSSPSDF) has biased composition (low complexity). Over residues 420–432 (RKRKRKSSRGFRQ) the composition is skewed to basic residues.

This Mus musculus (Mouse) protein is EF-hand calcium-binding domain-containing protein 3 (Efcab3).